A 201-amino-acid polypeptide reads, in one-letter code: Recombination protein RecR (201 aa).

The C4-type zinc finger occupies 57 to 72; sequence CADCRTFTEQEVCNIC. A Toprim domain is found at 81 to 176; sequence GQICVVESPA…EASRIAHGVP (96 aa).

This sequence belongs to the RecR family.

Functionally, may play a role in DNA repair. It seems to be involved in an RecBC-independent recombinational process of DNA repair. It may act with RecF and RecO. This is Recombination protein RecR from Escherichia coli O17:K52:H18 (strain UMN026 / ExPEC).